The primary structure comprises 142 residues: Large ribosomal subunit protein uL11 (142 aa).

It belongs to the universal ribosomal protein uL11 family. Part of the ribosomal stalk of the 50S ribosomal subunit. Interacts with L10 and the large rRNA to form the base of the stalk. L10 forms an elongated spine to which L12 dimers bind in a sequential fashion forming a multimeric L10(L12)X complex. In terms of processing, one or more lysine residues are methylated.

Functionally, forms part of the ribosomal stalk which helps the ribosome interact with GTP-bound translation factors. The protein is Large ribosomal subunit protein uL11 of Klebsiella pneumoniae (strain 342).